The sequence spans 819 residues: DNA topoisomerase 4 subunit A (819 aa).

In terms of domain architecture, Topo IIA-type catalytic spans 30–496; that stretch reads LPDIRDGLKP…QIIEIDTASL (467 aa). Tyr118 acts as the O-(5'-phospho-DNA)-tyrosine intermediate in catalysis.

This sequence belongs to the type II topoisomerase GyrA/ParC subunit family. ParC type 2 subfamily. Heterotetramer composed of ParC and ParE.

It is found in the cell membrane. It carries out the reaction ATP-dependent breakage, passage and rejoining of double-stranded DNA.. In terms of biological role, topoisomerase IV is essential for chromosome segregation. It relaxes supercoiled DNA. Performs the decatenation events required during the replication of a circular DNA molecule. The polypeptide is DNA topoisomerase 4 subunit A (Streptococcus pyogenes serotype M6 (strain ATCC BAA-946 / MGAS10394)).